A 387-amino-acid polypeptide reads, in one-letter code: Carboxyaminopropylagmatine decarboxylase (387 aa).

At lysine 52 the chain carries N6-(pyridoxal phosphate)lysine.

The protein belongs to the Orn/Lys/Arg decarboxylase class-II family. It depends on pyridoxal 5'-phosphate as a cofactor.

It catalyses the reaction N(1)-[(S)-3-amino-3-carboxypropyl]agmatine + H(+) = N(1)-(3-aminopropyl)agmatine + CO2. The protein operates within amine and polyamine biosynthesis; spermidine biosynthesis. Decarboxylase involved in the biosynthesis of spermidine via the carboxyaminopropylagmatine (CAPA) pathway. Catalyzes the decarboxylation of CAPA to form aminopropylagmatine (APA). Can also decarboxylate carboxyspermidine and carboxynorspermidine, but not ornithine, arginine, lysine and meso-diaminopimelate. The sequence is that of Carboxyaminopropylagmatine decarboxylase from Synechocystis sp. (strain ATCC 27184 / PCC 6803 / Kazusa).